The following is a 560-amino-acid chain: Probable sulfate transporter MT1781 (560 aa).

Helical transmembrane passes span 29–49 (VLAGLTVAAYLIPQAMAYATV), 51–71 (GLPPAAGLWASIAPLAIYALL), 79–99 (IGPESATALMTAAVLAPMAAG), 105–125 (AVLAATLGLLVGLICLLAGTA), 138–158 (VLVGYMAGIALVMISSQLGTI), 184–204 (WPTFVLAMSVLALLTMLTRWA), 207–227 (APGPIIAVLAATMLVAVMSLD), 256–276 (ALIIPAAGIAIVTFTDGVLTA), 333–353 (LIALGLVVIVMVFASGLLAMF), 355–375 (IAALGALVVYAALRLIDLSEF), and 394–414 (AAVLGLGVFYGVLAAVALSIL). The 116-residue stretch at 442-557 (DYPQAKRVPG…MTLPTAVQAF (116 aa)) folds into the STAS domain.

This sequence belongs to the SLC26A/SulP transporter (TC 2.A.53) family.

Its subcellular location is the cell membrane. The chain is Probable sulfate transporter MT1781 from Mycobacterium tuberculosis (strain CDC 1551 / Oshkosh).